A 600-amino-acid polypeptide reads, in one-letter code: 69 kDa paraflagellar rod protein (600 aa).

Positions D335–G355 are calmodulin-binding.

Heterodimer of a 69 kDa and a 73 kDa protein.

It is found in the cell projection. The protein resides in the cilium. Its subcellular location is the flagellum. It localises to the cytoplasm. The protein localises to the cytoskeleton. In terms of biological role, major component of the paraflagellar rod (PFR). The PFR is a highly ordered lattices of fibrous proteins that are located inside the flagellum and assume a fixed orientation with respect to the microtubular axoneme. The chain is 69 kDa paraflagellar rod protein (PFRA) from Trypanosoma brucei brucei.